A 63-amino-acid chain; its full sequence is Antimicrobial peptide 2 (63 aa).

A signal peptide spans 1-27 (MAKVPIAFLKFVIVLILFIAMSGMIEA). Intrachain disulfides connect C28-C45, C35-C49, and C44-C60.

It belongs to the AMP family. Homodimer. As to expression, seed specific.

It localises to the secreted. Possesses antifungal activity and is also active on two tested Gram-positive bacteria but is non-toxic for Gram-negative bacteria and cultured human cells. In Mirabilis jalapa (Garden four-o'clock), this protein is Antimicrobial peptide 2 (AMP2).